A 205-amino-acid polypeptide reads, in one-letter code: Small ribosomal subunit protein uS2 (205 aa).

The protein belongs to the universal ribosomal protein uS2 family.

The polypeptide is Small ribosomal subunit protein uS2 (Methanoculleus marisnigri (strain ATCC 35101 / DSM 1498 / JR1)).